We begin with the raw amino-acid sequence, 343 residues long: tRNA-specific 2-thiouridylase MnmA 2 (343 aa).

ATP contacts are provided by residues 7–14 and Leu-33; that span reads GMSGGVDS. Cys-91 serves as the catalytic Nucleophile. Residues Cys-91 and Cys-189 are joined by a disulfide bond. Gly-115 is a binding site for ATP. Positions 139–141 are interaction with tRNA; that stretch reads KDQ. The active-site Cysteine persulfide intermediate is Cys-189.

This sequence belongs to the MnmA/TRMU family.

It localises to the cytoplasm. The enzyme catalyses S-sulfanyl-L-cysteinyl-[protein] + uridine(34) in tRNA + AH2 + ATP = 2-thiouridine(34) in tRNA + L-cysteinyl-[protein] + A + AMP + diphosphate + H(+). In terms of biological role, catalyzes the 2-thiolation of uridine at the wobble position (U34) of tRNA, leading to the formation of s(2)U34. This is tRNA-specific 2-thiouridylase MnmA 2 from Fusobacterium nucleatum subsp. nucleatum (strain ATCC 25586 / DSM 15643 / BCRC 10681 / CIP 101130 / JCM 8532 / KCTC 2640 / LMG 13131 / VPI 4355).